We begin with the raw amino-acid sequence, 588 residues long: Progranulin (588 aa).

The signal sequence occupies residues 1 to 17; the sequence is MWILVSWLALVARLVAG. Residue asparagine 38 is glycosylated (N-linked (GlcNAc...) asparagine). 12 cysteine pairs are disulfide-bonded: cysteine 125/cysteine 138, cysteine 132/cysteine 148, cysteine 281/cysteine 293, cysteine 287/cysteine 303, cysteine 294/cysteine 311, cysteine 304/cysteine 318, cysteine 312/cysteine 325, cysteine 319/cysteine 332, cysteine 363/cysteine 375, cysteine 369/cysteine 385, cysteine 394/cysteine 407, and cysteine 401/cysteine 413. The N-linked (GlcNAc...) asparagine glycan is linked to asparagine 372. The N-linked (GlcNAc...) asparagine glycan is linked to asparagine 525.

This sequence belongs to the granulin family. Progranulin is secreted as a homodimer. Interacts with SLPI; interaction protects progranulin from proteolysis. Interacts (via region corresponding to granulin-7 peptide) with CTSD; stabilizes CTSD and increases its proteolytic activity. Interacts (via region corresponding to granulin-7 peptide) with SORT1; this interaction mediates endocytosis and lysosome delivery of progranulin; interaction occurs at the neuronal cell surface in a stressed nervous system. Interacts with PSAP; facilitates lysosomal delivery of progranulin from the extracellular space and the biosynthetic pathway. Forms a complex with PSAP and M6PR; PSAP bridges the binding between progranulin and M6PR. Forms a complex with PSAP and SORT1; progranulin bridges the interaction between PSAP and SORT1; facilitates lysosomal targeting of PSAP via SORT1; interaction enhances PSAP uptake in primary cortical neurons. Interacts (via regions corresponding to granulin-2 and granulin-7 peptides) with GBA1; this interaction prevents aggregation of GBA1-SCARB2 complex via interaction with HSPA1A upon stress. Interacts (via region corresponding to granulin-7 peptide) with HSPA1A; mediates recruitment of HSPA1A to GBA1 and prevents GBA1 aggregation in response to stress. In terms of processing, cleaved by ELANE; proteolysis is blocked by SLPI and is concentration- and time-dependent and induces CXCL8/IL-8 production; granulin-3 and granulin-4 are resistant to ELANE. Cleaved by CTSL in lysosome thus regulating the maturation and turnover of progranulin within the lysosome. As to expression, ubiquitous; most abundant in the spleen and several tissues of endocrine significance.

It localises to the secreted. The protein localises to the lysosome. Functionally, secreted protein that acts as a key regulator of lysosomal function and as a growth factor involved in inflammation, wound healing and cell proliferation. Regulates protein trafficking to lysosomes, and also the activity of lysosomal enzymes. Also facilitates the acidification of lysosomes, causing degradation of mature CTSD by CTSB. In addition, functions as a wound-related growth factor that acts directly on dermal fibroblasts and endothelial cells to promote division, migration and the formation of capillary-like tubule structures. Also promotes epithelial cell proliferation by blocking TNF-mediated neutrophil activation preventing release of oxidants and proteases. Moreover, modulates inflammation in neurons by preserving neurons survival, axonal outgrowth and neuronal integrity. Inhibits epithelial cell proliferation and induces epithelial cells to secrete IL-8. In terms of biological role, stabilizes CTSD through interaction with CTSD leading to maintain its aspartic-type peptidase activity. The sequence is that of Progranulin (Grn) from Rattus norvegicus (Rat).